The chain runs to 1439 residues: Histone-lysine N-methyltransferase NSD3 (1439 aa).

A disordered region spans residues 121–151 (PHEILEKPSPPQPPPPPSVPQTVIPKKTGSP). Pro residues predominate over residues 128–139 (PSPPQPPPPPSV). Residue Ser150 is modified to Phosphoserine. Residues 154–157 (KLKI) carry the KIKL motif. Residues 181–247 (QASEHTKSKH…PREEPVLKEA (67 aa)) are disordered. Positions 187–201 (KSKHESRKEKRKKSN) are enriched in basic residues. Basic and acidic residues predominate over residues 202–244 (RHESSRSEERRSHKIPKLEPEGQNRPNERVDTAPEKPREEPVL). Residues Lys218 and Lys245 each participate in a glycyl lysine isopeptide (Lys-Gly) (interchain with G-Cter in SUMO2) cross-link. In terms of domain architecture, PWWP 1 spans 270-333 (VGDLVWSKVG…EKRVREYKGH (64 aa)). 2 disordered regions span residues 344–367 (AKQA…ERAQ) and 401–466 (EASS…PPPV). Composition is skewed to polar residues over residues 401 to 413 (EASS…VTSK) and 425 to 445 (VLNS…QSST). Residue Lys413 forms a Glycyl lysine isopeptide (Lys-Gly) (interchain with G-Cter in SUMO2) linkage. Ser457 bears the Phosphoserine mark. Glycyl lysine isopeptide (Lys-Gly) (interchain with G-Cter in SUMO2) cross-links involve residues Lys502 and Lys532. The disordered stretch occupies residues 540–695 (QDRLIISSPS…VDSSLSRRGV (156 aa)). A compositionally biased stretch (polar residues) spans 546-568 (SSPSQRSEKPAQSASSPEATSGS). Positions 583 to 595 (TRSESEKSAEVVP) are enriched in basic and acidic residues. 3 positions are modified to phosphoserine: Ser585, Ser587, and Ser590. A Glycyl lysine isopeptide (Lys-Gly) (interchain with G-Cter in SUMO2) cross-link involves residue Lys628. The segment covering 637–648 (STDVETASCTYR) has biased composition (polar residues). At Ser655 the chain carries Phosphoserine. The segment covering 670–691 (DSPSATADADASDAQSVDSSLS) has biased composition (low complexity). 3 PHD-type zinc fingers span residues 701–748 (DTVC…CETG), 749–805 (QHPC…CSME), and 862–955 (VGFC…CKAG). Lys790 carries the post-translational modification N6-acetyllysine. The PWWP 2 domain maps to 960 to 1025 (YKQIVWVKLG…QGRVFPYVEG (66 aa)). Residues 1036–1065 (INKTFKKALEEAAKRFQELKAQRESKEALE) are a coiled coil. The 51-residue stretch at 1096–1146 (SEIPRCNCKPGDENPCGLESQCLNRMSQYECHPQVCPAGDRCQNQCFTKRL) folds into the AWS domain. Positions 1148–1265 (PDAEVIKTER…AGMELTFNYN (118 aa)) constitute an SET domain. Residue Lys1154 forms a Glycyl lysine isopeptide (Lys-Gly) (interchain with G-Cter in SUMO2) linkage. A Post-SET domain is found at 1272 to 1288 (GRTVCHCGADNCSGFLG). The PHD-type 4; atypical zinc finger occupies 1323–1370 (EDYCFQCGDGGELVMCDKKDCPKAYHLLCLNLTQPPHGKWECPWHRCD).

The protein belongs to the class V-like SAM-binding methyltransferase superfamily. Histone-lysine methyltransferase family. SET2 subfamily. In terms of assembly, interacts with BRD4. Interacts (via KIKL motif) with BRD3 (via NET domain).

Its subcellular location is the nucleus. The protein localises to the chromosome. The catalysed reaction is L-lysyl(4)-[histone H3] + 2 S-adenosyl-L-methionine = N(6),N(6)-dimethyl-L-lysyl(4)-[histone H3] + 2 S-adenosyl-L-homocysteine + 2 H(+). It carries out the reaction L-lysyl(27)-[histone H3] + 2 S-adenosyl-L-methionine = N(6),N(6)-dimethyl-L-lysyl(27)-[histone H3] + 2 S-adenosyl-L-homocysteine + 2 H(+). Functionally, histone methyltransferase. Preferentially dimethylates 'Lys-4' and 'Lys-27' of histone H3 forming H3K4me2 and H3K27me2. H3 'Lys-4' methylation represents a specific tag for epigenetic transcriptional activation, while 'Lys-27' is a mark for transcriptional repression. The chain is Histone-lysine N-methyltransferase NSD3 (Nsd3) from Mus musculus (Mouse).